The primary structure comprises 513 residues: Cytochrome P450 monooxygenase eqxH (513 aa).

A helical transmembrane segment spans residues 13 to 32 (QYAILCGITVFTLFIVQLSL). 2 N-linked (GlcNAc...) asparagine glycosylation sites follow: asparagine 130 and asparagine 295. Heme is bound at residue cysteine 449.

This sequence belongs to the cytochrome P450 family. The cofactor is heme.

Its subcellular location is the membrane. It participates in mycotoxin biosynthesis. Cytochrome P450 monooxygenase; part of the gene cluster that mediates the biosynthesis of equisetin, a trans-fused decalin-containing tetramic acid with antimicrobial activity. The PKS module of eqxS together with the enoylreductase eqxC catalyze the formation of the polyketide unit which is then conjugated to L-serine by the condensation domain of the eqxS NRPS module. Activity of the Dieckmann cyclase domain (RED) results in release of the Dieckmann product intermediate. Diels-Alderase eqx3 is involved in endo-selective Diels-Alder cycloaddition to form the decalin ring, leading to the production of N-desmethylequisetin also called trichosetin. Subsequent N-methylation is carried out by eqxD to give equisetin. This Fusarium heterosporum protein is Cytochrome P450 monooxygenase eqxH.